Here is a 217-residue protein sequence, read N- to C-terminus: Somatotropin (217 aa).

A signal peptide spans Met1–Ala26. His44 provides a ligand contact to Zn(2+). A disulfide bond links Cys79 and Cys191. Ser132 bears the Phosphoserine mark. Gln163 carries the post-translational modification Deamidated glutamine; by deterioration. A Phosphoserine modification is found at Ser176. Asn178 carries the deamidated asparagine; by deterioration modification. Glu200 contacts Zn(2+). Cysteines 208 and 215 form a disulfide.

The protein belongs to the somatotropin/prolactin family. In terms of assembly, monomer, dimer, trimer, tetramer and pentamer, disulfide-linked or non-covalently associated, in homomeric and heteromeric combinations. Can also form a complex either with GHBP or with the alpha2-macroglobulin complex.

Its subcellular location is the secreted. Functionally, plays an important role in growth control. Its major role in stimulating body growth is to stimulate the liver and other tissues to secrete IGF1. It stimulates both the differentiation and proliferation of myoblasts. It also stimulates amino acid uptake and protein synthesis in muscle and other tissues. The polypeptide is Somatotropin (GH1) (Homo sapiens (Human)).